A 601-amino-acid chain; its full sequence is Beta-phellandrene synthase (601 aa).

The transit peptide at 1–35 directs the protein to the chloroplast; sequence MSTISIHHVGILRNPLPSKNKRALINNPWSLSLPR. 2 residues coordinate Mn(2+): D356 and D360. A DDXXD motif motif is present at residues 356–360; that stretch reads DDVYD. Homodimerization regions lie at residues 362–368 and 434–471; these read YGTLDEL and EAKW…LSIP. Positions 499 and 507 each coordinate Mn(2+).

This sequence belongs to the terpene synthase family. As to quaternary structure, homodimer. It depends on Mn(2+) as a cofactor. The cofactor is Mg(2+). As to expression, expressed in peltate glandular trichomes. Present at low levels in flowers, leaves and stems.

The protein localises to the plastid. The protein resides in the chloroplast. It catalyses the reaction (2E)-geranyl diphosphate = beta-phellandrene + diphosphate. The enzyme catalyses (2E)-geranyl diphosphate = (1R,5R)-sabinene + diphosphate. It functions in the pathway secondary metabolite biosynthesis; terpenoid biosynthesis. Its function is as follows. Involved in the biosynthesis of phenolic monoterpenes natural products. Monoterpene synthase that catalyzes mainly the formation of olefins such as sabinene and beta-phellandrene, and minor amounts of other monoterpenes (e.g. myrcene, gamma-terpinene, alpha-thujene and alpha-pinene) from geranyl diphosphate (GPP). This chain is Beta-phellandrene synthase, found in Origanum vulgare (Wild marjoram).